An 857-amino-acid polypeptide reads, in one-letter code: Trehalose transporter 1 (857 aa).

Disordered regions lie at residues 1–28 and 62–202; these read MSGR…KLKE and DPFL…QKAT. The Cytoplasmic portion of the chain corresponds to 1 to 392; it reads MSGRDNRGAG…VYRPTTNPIY (392 aa). Position 9 is a phosphothreonine (Ala-9). Gly-12 carries the post-translational modification Phosphoserine. The segment covering 69–81 has biased composition (polar residues); the sequence is VSPQRHPQNTVRT. Positions 134 to 143 are enriched in basic and acidic residues; it reads EIREHRDRQQ. The segment covering 171–181 has biased composition (polar residues); sequence GNSNTNSNKAA. Phosphoserine occurs at positions 248, 249, and 250. 2 disordered regions span residues 249-269 and 280-299; these read SSEE…HQSL and VLQG…EHKR. Residues Ser-320 and Ser-322 each carry the phosphoserine modification. The disordered stretch occupies residues 327–346; sequence LTSRQHFQQQRSISTDSRKS. The span at 330 to 341 shows a compositional bias: polar residues; it reads RQHFQQQRSIST. The chain crosses the membrane as a helical span at residues 393 to 413; it reads IWTQVLAALSVSLGSLVVGFV. Residues 414 to 440 lie on the Extracellular side of the membrane; it reads SAYTSPALVSMTDRNITSFEVTQDAGS. An N-linked (GlcNAc...) asparagine glycan is attached at Asn-428. Residues 441–461 traverse the membrane as a helical segment; that stretch reads WVGGIMPLAGLAGGIAGGPLI. Topologically, residues 462–473 are cytoplasmic; it reads EYLGRRNTILAT. A helical transmembrane segment spans residues 474 to 494; that stretch reads AVPFIVSSLLIACAVNVAMVL. Topologically, residues 495–497 are extracellular; the sequence is CGR. A helical membrane pass occupies residues 498-518; sequence FLAGFCVGIASLSLPVYLGET. The Cytoplasmic segment spans residues 519-528; sequence VQPEVRGTLG. Residues 529-549 form a helical membrane-spanning segment; that stretch reads LLPTAFGNIGILLCFVAGSFM. N-linked (GlcNAc...) asparagine glycosylation occurs at Asn-550. Residues 550-552 lie on the Extracellular side of the membrane; the sequence is NWS. A helical membrane pass occupies residues 553-573; it reads MLAFLGAALPVPFLILMFLIP. The Cytoplasmic portion of the chain corresponds to 574 to 636; the sequence is ETPRWFVGRG…ELLKLNNLKP (63 aa). A helical membrane pass occupies residues 637–657; the sequence is LSISLGLMFFQQFSGINAVIF. At 658–673 the chain is on the extracellular side; the sequence is YTVQIFKDAGSTIDGN. The chain crosses the membrane as a helical span at residues 674–694; that stretch reads LCTIIVGIVNFLATFIGIVLI. At 695 to 700 the chain is on the cytoplasmic side; the sequence is DRAGRK. Residues 701 to 721 form a helical membrane-spanning segment; that stretch reads ILLYVSDIAMVLTLFVLGGFF. At 722 to 740 the chain is on the extracellular side; the sequence is YCKTYGPDVSHLGWLPLTC. Residues 741–761 form a helical membrane-spanning segment; the sequence is FVIYILGFSLGFGPIPWLMMG. Topologically, residues 762 to 767 are cytoplasmic; that stretch reads EILPAK. A helical membrane pass occupies residues 768 to 788; it reads IRGSAASVATAFNWFCTFVVT. The Extracellular portion of the chain corresponds to 789–801; that stretch reads KTFQDLTVAMGAH. Residues 802–822 form a helical membrane-spanning segment; it reads GAFWLFGAICFVGLFFVIIYV. Over 823–857 the chain is Cytoplasmic; it reads PETQGKTLEDIERKMMGRVRRMSSVANIKPLSFNM. Phosphoserine occurs at positions 845 and 846.

The protein belongs to the major facilitator superfamily. Sugar transporter (TC 2.A.1.1) family. Trehalose transporter subfamily. As to expression, expressed in perineurial glia of the outer layer of the nervous system that forms the blood brain barrier (at protein level). Expressed in the fat body (at protein level). In terms of tissue distribution, may be specifically expressed in perineurial glia (at protein level). May be specifically expressed in the fat body (at protein level).

Its subcellular location is the cell membrane. The protein resides in the vesicle. The catalysed reaction is alpha,alpha-trehalose(in) = alpha,alpha-trehalose(out). It catalyses the reaction D-glucose(out) = D-glucose(in). Low-capacity facilitative transporter for trehalose. Can also transport glucose. Does not transport maltose, sucrose, lactose or fructose. Mediates the bidirectional transfer of trehalose. Responsible for the transport of trehalose synthesized in the fat body and the incorporation of trehalose into other tissues that require a carbon source, thereby regulating trehalose levels in the hemolymph. Required in glial cells of the blood brain barrier to fuel glycolysis but not required in neurons. Neurons rely on the citric acid cycle for their energy needs and utilise alanine and lactate, by-products of glial cell glycolysis released into the hemolymph, as fuel. Increased expression in glial cells of the blood brain barrier during starvation and increased cell surface localization enhances carbohydrate uptake to protect the central nervous system from restricted nutrient availability. This Drosophila melanogaster (Fruit fly) protein is Trehalose transporter 1.